Consider the following 696-residue polypeptide: DNA ligase (696 aa).

NAD(+) contacts are provided by residues 41-45 (DGQYD), 90-91 (SL), and Glu120. Lys122 functions as the N6-AMP-lysine intermediate in the catalytic mechanism. Arg143, Glu180, Lys296, and Lys320 together coordinate NAD(+). Zn(2+) contacts are provided by Cys414, Cys417, Cys433, and Cys439. In terms of domain architecture, BRCT spans 603–692 (STPRTLEGLT…PDAVARPAEE (90 aa)).

This sequence belongs to the NAD-dependent DNA ligase family. LigA subfamily. It depends on Mg(2+) as a cofactor. Mn(2+) is required as a cofactor.

It carries out the reaction NAD(+) + (deoxyribonucleotide)n-3'-hydroxyl + 5'-phospho-(deoxyribonucleotide)m = (deoxyribonucleotide)n+m + AMP + beta-nicotinamide D-nucleotide.. Its function is as follows. DNA ligase that catalyzes the formation of phosphodiester linkages between 5'-phosphoryl and 3'-hydroxyl groups in double-stranded DNA using NAD as a coenzyme and as the energy source for the reaction. It is essential for DNA replication and repair of damaged DNA. In Kineococcus radiotolerans (strain ATCC BAA-149 / DSM 14245 / SRS30216), this protein is DNA ligase.